Here is a 110-residue protein sequence, read N- to C-terminus: Large ribosomal subunit protein uL22 (110 aa).

It belongs to the universal ribosomal protein uL22 family. As to quaternary structure, part of the 50S ribosomal subunit.

Functionally, this protein binds specifically to 23S rRNA; its binding is stimulated by other ribosomal proteins, e.g. L4, L17, and L20. It is important during the early stages of 50S assembly. It makes multiple contacts with different domains of the 23S rRNA in the assembled 50S subunit and ribosome. Its function is as follows. The globular domain of the protein is located near the polypeptide exit tunnel on the outside of the subunit, while an extended beta-hairpin is found that lines the wall of the exit tunnel in the center of the 70S ribosome. The chain is Large ribosomal subunit protein uL22 from Vibrio campbellii (strain ATCC BAA-1116).